The following is a 551-amino-acid chain: Cleavage and polyadenylation specificity factor subunit 6 (551 aa).

One can recognise an RRM domain in the interval 81 to 161 (IALYIGNLTW…QNPVVTPCNK (81 aa)). Residue Thr-157 is modified to Phosphothreonine. The span at 169–180 (MQSRKTTQSGQM) shows a compositional bias: polar residues. 2 disordered regions span residues 169-410 (MQSR…TPLS) and 477-551 (LHGI…YRHR). Composition is skewed to pro residues over residues 237-265 (TRPP…PLAG), 285-366 (GQPP…PPPA), and 377-388 (GPPPTDPYGRPP). Basic and acidic residues-rich tracts occupy residues 389–404 (PYDR…EMDA) and 489–503 (SRRE…SRSR). Phosphoserine occurs at positions 494, 500, 511, 513, and 525. A compositionally biased stretch (basic residues) spans 504–514 (EKSRRHKSRSR). Over residues 515-551 (DRHDDYYRERSRERERHRDRDRDRDRERDREREYRHR) the composition is skewed to basic and acidic residues.

The protein belongs to the RRM CPSF6/7 family. As to quaternary structure, component of the cleavage factor Im (CFIm) complex.

It localises to the nucleus. The protein localises to the nucleoplasm. Its subcellular location is the nucleus speckle. The protein resides in the cytoplasm. Functionally, component of the cleavage factor Im (CFIm) complex that functions as an activator of the pre-mRNA 3'-end cleavage and polyadenylation processing required for the maturation of pre-mRNA into functional mRNAs. CFIm contributes to the recruitment of multiprotein complexes on specific sequences on the pre-mRNA 3'-end, so called cleavage and polyadenylation signals (pA signals). Most pre-mRNAs contain multiple pA signals, resulting in alternative cleavage and polyadenylation (APA) producing mRNAs with variable 3'-end formation. The CFIm complex acts as a key regulator of cleavage and polyadenylation site choice during APA through its binding to 5'-UGUA-3' elements localized in the 3'-untranslated region (UTR) for a huge number of pre-mRNAs. Plays a role in mRNA export. This is Cleavage and polyadenylation specificity factor subunit 6 from Gallus gallus (Chicken).